The following is a 325-amino-acid chain: Bifunctional nuclease 2 (325 aa).

One can recognise a BFN domain in the interval 119–254; the sequence is CVHNNSQGRN…SLAYSDGIRS (136 aa). The UVR domain maps to 285 to 320; it reads EAQEFGLIRNMLIAAVEERYKDAATWRDKLMLLRSK.

It belongs to the bifunctional nuclease family.

It is found in the nucleus. Its function is as follows. Bifunctional nuclease with both RNase and DNase activities. Involved in basal defense response. Participates in abscisic acid-derived callose deposition following infection by a necrotrophic pathogen. This is Bifunctional nuclease 2 (BBD2) from Oryza sativa subsp. japonica (Rice).